The primary structure comprises 488 residues: MKKLTALFNLPELKNDIELHNMVLDSRKVKAGDLFVAIKGHQVDGNQFIDSALHSGASAVVSETELSSEHLTVAFIGNVPVVKYYQLAHHLSSLADVFYDSPSNNLTLVGVTGTNGKTTISQLLAQWAELLGHRAAVMGTIGNGLFGQIVEAKNTTGSAVEIQSSLSAFKHAGADFTSIEVSSHGLAQHRVEALHFKAAIFTNLTRDHLDYHQSMENYAAAKKRLFTELDTQIKVINADDEIGYQWLTELPDAIAVSMNADFKVGSHQWMKAINIHYHFKGADITFESSWGNGVLHSPLIGAFNVSNLLLVMTTLLSFGYPLENLLATAKSLKGVCGRMEMIQYPNKPTVIVDYAHTPDALEKALIAAREHCQGELWCIFGCGGDRDRGKRPLMAQVAEQFAEKIIVTKDNPRTESQSQIETDIVAGFKNMEKVGIIPDRAQAIQFAIESAVENDVILIAGKGHEHYQIIGSEVVHFSDQEIALDFLK.

UDP-N-acetyl-alpha-D-muramoyl-L-alanyl-D-glutamate-binding positions include leucine 24, serine 26, and 41–43 (HQV). 113–119 (GTNGKTT) lines the ATP pocket. UDP-N-acetyl-alpha-D-muramoyl-L-alanyl-D-glutamate contacts are provided by residues asparagine 154, 155-156 (TT), serine 182, glutamine 188, and arginine 190. Position 222 is an N6-carboxylysine (lysine 222). Residues arginine 386, 410–413 (DNPR), glycine 461, and glutamate 465 contribute to the meso-2,6-diaminopimelate site. The Meso-diaminopimelate recognition motif signature appears at 410-413 (DNPR).

The protein belongs to the MurCDEF family. MurE subfamily. It depends on Mg(2+) as a cofactor. In terms of processing, carboxylation is probably crucial for Mg(2+) binding and, consequently, for the gamma-phosphate positioning of ATP.

It is found in the cytoplasm. It carries out the reaction UDP-N-acetyl-alpha-D-muramoyl-L-alanyl-D-glutamate + meso-2,6-diaminopimelate + ATP = UDP-N-acetyl-alpha-D-muramoyl-L-alanyl-gamma-D-glutamyl-meso-2,6-diaminopimelate + ADP + phosphate + H(+). It participates in cell wall biogenesis; peptidoglycan biosynthesis. Functionally, catalyzes the addition of meso-diaminopimelic acid to the nucleotide precursor UDP-N-acetylmuramoyl-L-alanyl-D-glutamate (UMAG) in the biosynthesis of bacterial cell-wall peptidoglycan. The protein is UDP-N-acetylmuramoyl-L-alanyl-D-glutamate--2,6-diaminopimelate ligase of Haemophilus influenzae (strain ATCC 51907 / DSM 11121 / KW20 / Rd).